Reading from the N-terminus, the 536-residue chain is MSKFVFVTGGVVSSIGKGIVAASLGRLLKSRGYSVSILKLDPYLNVDPGTMSPFQHGEVFVTEDGAETDLDLGHYERFTDTAMTRLNSVTTGSIYQAVINKERRGNYNGGTVQVIPHITGEIRERIHRVAANSNADIIITEIGGTVGDIESLPFLEAIREFKNDVNRNDVAYIHVTLLPYIKTSGEIKTKPTQHSVKELRSIGIQPDLLVCRSDKSINEALKKKLSGFCGVNINSVIEALDADSIYSVPLSLKKEGLCKETLKYLDLEDKKCDLKNWEQLIHNLRNPGDPIKVALVGKYIELGDAYLSVVEALRHACIEQRALLDLHWVSAEMIENNSAETYLNEVDAIVVPGGFGNRGVNGKISAIKFARENKIPFLGLCLGMQCAVIEWARNVANLPDASSSELDPNTPNPVIHLLPEQEDVVDLGGTMRLGVYPCRLTKNTTGKNLYDEDVIYERHRHRYEFNNYYKQSFLDSGYKISGTSPDGRLVELIELENHPYFLACQYHPEFLSRPGKPHPLFKGLIKASQDKLTQSN.

The segment at 1–267 (MSKFVFVTGG…CKETLKYLDL (267 aa)) is amidoligase domain. S13 contributes to the CTP binding site. S13 lines the UTP pocket. Residues 14-19 (SIGKGI) and D71 each bind ATP. Residues D71 and E141 each contribute to the Mg(2+) site. Residues 148 to 150 (DIE), 188 to 193 (KTKPTQ), and K224 each bind CTP. Residues 188–193 (KTKPTQ) and K224 contribute to the UTP site. Residues 292-534 (KVALVGKYIE…IKASQDKLTQ (243 aa)) enclose the Glutamine amidotransferase type-1 domain. L-glutamine is bound at residue G354. The active-site Nucleophile; for glutamine hydrolysis is the C381. L-glutamine-binding positions include 382–385 (LGMQ), E405, and R462. Catalysis depends on residues H507 and E509.

This sequence belongs to the CTP synthase family. In terms of assembly, homotetramer.

The enzyme catalyses UTP + L-glutamine + ATP + H2O = CTP + L-glutamate + ADP + phosphate + 2 H(+). It carries out the reaction L-glutamine + H2O = L-glutamate + NH4(+). The catalysed reaction is UTP + NH4(+) + ATP = CTP + ADP + phosphate + 2 H(+). It functions in the pathway pyrimidine metabolism; CTP biosynthesis via de novo pathway; CTP from UDP: step 2/2. Its activity is regulated as follows. Allosterically activated by GTP, when glutamine is the substrate; GTP has no effect on the reaction when ammonia is the substrate. The allosteric effector GTP functions by stabilizing the protein conformation that binds the tetrahedral intermediate(s) formed during glutamine hydrolysis. Inhibited by the product CTP, via allosteric rather than competitive inhibition. Its function is as follows. Catalyzes the ATP-dependent amination of UTP to CTP with either L-glutamine or ammonia as the source of nitrogen. Regulates intracellular CTP levels through interactions with the four ribonucleotide triphosphates. This chain is CTP synthase, found in Prochlorococcus marinus (strain AS9601).